Consider the following 120-residue polypeptide: NAD(P)H-quinone oxidoreductase subunit 3, chloroplastic (120 aa).

3 helical membrane-spanning segments follow: residues I9 to G29, M64 to M84, and I88 to L108.

It belongs to the complex I subunit 3 family. In terms of assembly, NDH is composed of at least 16 different subunits, 5 of which are encoded in the nucleus.

It localises to the plastid. It is found in the chloroplast thylakoid membrane. The enzyme catalyses a plastoquinone + NADH + (n+1) H(+)(in) = a plastoquinol + NAD(+) + n H(+)(out). It catalyses the reaction a plastoquinone + NADPH + (n+1) H(+)(in) = a plastoquinol + NADP(+) + n H(+)(out). In terms of biological role, NDH shuttles electrons from NAD(P)H:plastoquinone, via FMN and iron-sulfur (Fe-S) centers, to quinones in the photosynthetic chain and possibly in a chloroplast respiratory chain. The immediate electron acceptor for the enzyme in this species is believed to be plastoquinone. Couples the redox reaction to proton translocation, and thus conserves the redox energy in a proton gradient. The protein is NAD(P)H-quinone oxidoreductase subunit 3, chloroplastic of Spinacia oleracea (Spinach).